A 236-amino-acid polypeptide reads, in one-letter code: Phosphoribosylaminoimidazole-succinocarboxamide synthase (236 aa).

It belongs to the SAICAR synthetase family.

It carries out the reaction 5-amino-1-(5-phospho-D-ribosyl)imidazole-4-carboxylate + L-aspartate + ATP = (2S)-2-[5-amino-1-(5-phospho-beta-D-ribosyl)imidazole-4-carboxamido]succinate + ADP + phosphate + 2 H(+). It functions in the pathway purine metabolism; IMP biosynthesis via de novo pathway; 5-amino-1-(5-phospho-D-ribosyl)imidazole-4-carboxamide from 5-amino-1-(5-phospho-D-ribosyl)imidazole-4-carboxylate: step 1/2. In Campylobacter curvus (strain 525.92), this protein is Phosphoribosylaminoimidazole-succinocarboxamide synthase.